We begin with the raw amino-acid sequence, 182 residues long: uncharacterized protein (182 aa).

A Macro domain is found at M1–L170.

This is an uncharacterized protein from Sulfurisphaera tokodaii (strain DSM 16993 / JCM 10545 / NBRC 100140 / 7) (Sulfolobus tokodaii).